We begin with the raw amino-acid sequence, 308 residues long: Ecto-ADP-ribosyltransferase 5 (308 aa).

The signal sequence occupies residues 1–23 (MILEDLLMVLSCLALHILWKVQA). Cysteines 43 and 259 form a disulfide. Positions 63-253 (ALLRESWEAA…IVTLWSYNQT (191 aa)) constitute a TR mART core domain. Tyrosine 100 is a binding site for NAD(+). The N-linked (GlcNAc...) asparagine glycan is linked to asparagine 102. The NAD(+) site is built by arginine 161 and glutamine 181. Arginine 161 is a catalytic residue. Serine 184 is an active-site residue. An N-linked (GlcNAc...) asparagine glycan is attached at asparagine 197. Serine 215 lines the NAD(+) pocket. The active site involves glutamate 222. Asparagine 251 is a glycosylation site (N-linked (GlcNAc...) asparagine).

It belongs to the Arg-specific ADP-ribosyltransferase family.

The protein resides in the secreted. It is found in the membrane. The catalysed reaction is L-arginyl-[protein] + NAD(+) = N(omega)-(ADP-D-ribosyl)-L-arginyl-[protein] + nicotinamide + H(+). The chain is Ecto-ADP-ribosyltransferase 5 (Art5) from Rattus norvegicus (Rat).